A 776-amino-acid chain; its full sequence is Protein SEY1 (776 aa).

Residues M1 to H681 are Cytoplasmic-facing. Residues G34–Y263 form the GB1/RHD3-type G domain. GTP is bound at residue G44–S51. The helical transmembrane segment at I682–I702 threads the bilayer. The Lumenal segment spans residues R703 to P705. A helical transmembrane segment spans residues L706–L726. Topologically, residues W727 to K776 are cytoplasmic.

Belongs to the TRAFAC class dynamin-like GTPase superfamily. GB1/RHD3 GTPase family. RHD3 subfamily. In terms of assembly, interacts with RTN1 and YOP1; GTP binding is not required for these interactions.

Its subcellular location is the endoplasmic reticulum membrane. Its function is as follows. Cooperates with the reticulon proteins RTN1 and RTN2 and the tubule-shaping DP1 family protein YOP1 to generate and maintain the structure of the tubular endoplasmic reticulum network. Has GTPase activity, which is required for its function in ER organization. The chain is Protein SEY1 from Saccharomyces cerevisiae (strain RM11-1a) (Baker's yeast).